Here is a 315-residue protein sequence, read N- to C-terminus: HTH-type transcriptional regulator TreR (315 aa).

Positions 5 to 59 (LTIKDIARLSGVGKSTVSRVLNNESGVSERTRERVEAVMNQHGFSPSRSARAMRG) constitute an HTH lacI-type domain. The segment at residues 7-26 (IKDIARLSGVGKSTVSRVLN) is a DNA-binding region (H-T-H motif). Alpha,alpha-trehalose 6-phosphate contacts are provided by residues 71–77 (RLDSLSE), glycine 126, arginine 147, 187–190 (DITT), arginine 194, threonine 242, and tyrosine 284.

As to quaternary structure, homodimer.

Functionally, repressor of the treBC operon. It is able to bind trehalose-6-phosphate. The sequence is that of HTH-type transcriptional regulator TreR (treR) from Salmonella typhimurium (strain LT2 / SGSC1412 / ATCC 700720).